Reading from the N-terminus, the 1133-residue chain is Envelopment polyprotein (1133 aa).

The N-terminal stretch at 1–16 (MWSLLLLAALVGQGFA) is a signal peptide. Over 17 to 484 (LKNVFDMRIQ…PGFHGWATAA (468 aa)) the chain is Lumenal. Disulfide bonds link Cys-61–Cys-155, Cys-107–Cys-126, Cys-131–Cys-136, Cys-173–Cys-183, Cys-208–Cys-245, Cys-232–Cys-349, Cys-374–Cys-433, Cys-378–Cys-387, Cys-403–Cys-422, and Cys-450–Cys-473. N-linked (GlcNAc...) asparagine; by host glycosylation is present at Asn-132. Residues Asn-233 and Asn-345 are each glycosylated (N-linked (GlcNAc...) asparagine; by host). An N-linked (GlcNAc...) asparagine; by host glycan is attached at Asn-397. A helical membrane pass occupies residues 485-504 (LLITFCFGWVLIPACTLAIL). The Cytoplasmic segment spans residues 505-626 (LVLKFFANIL…NLFRYKSRCY (122 aa)). Residues 514–531 (LHTSNQENRFKAILRKIK) are binding to the ribonucleoprotein. 2 consecutive CCHC-type zinc fingers follow at residues 543–563 (CEIC…NLSC) and 568–589 (CPYC…YKVC). 3 binding to the ribonucleoprotein regions span residues 586–603 (YKVC…KKTV), 590–601 (QATHRFREDLKK), and 609–623 (GPGC…RYKS). Positions 609–632 (GPGCYRTLNLFRYKSRCYILTMWT) constitute an ITAM domain. The short motif at 613-616 (YRTL) is the YxxL element. Residues 627–647 (ILTMWTLLLIIESILWAASAA) form a helical membrane-spanning segment. Topologically, residues 648–1105 (EIPLVPLWTD…VMGIINGNWV (458 aa)) are lumenal. 8 disulfides stabilise this stretch: Cys-733–Cys-768, Cys-737–Cys-775, Cys-749–Cys-883, Cys-763–Cys-894, Cys-778–Cys-902, Cys-804–Cys-813, Cys-821–Cys-830, and Cys-861–Cys-865. Positions 755–775 (YEYENSWACNPPDCPGVGTGC) are fusion loop. N-linked (GlcNAc...) asparagine; by host glycosylation is present at Asn-926. Intrachain disulfides connect Cys-968–Cys-998, Cys-991–Cys-1043, Cys-1008–Cys-1013, Cys-1044–Cys-1049, and Cys-1083–Cys-1087. Residues 1106-1125 (VLIVLCVLLLFSLILLSILC) traverse the membrane as a helical segment. A binding to the ribonucleoprotein region spans residues 1120–1133 (LLSILCPVRKHKKS). The Cytoplasmic portion of the chain corresponds to 1126 to 1133 (PVRKHKKS).

The protein belongs to the hantavirus envelope glycoprotein family. In terms of assembly, homodimer. Homotetramer; forms heterotetrameric Gn-Gc spikes in the pre-fusion conformation. Interacts (via C-terminus) with the nucleoprotein. Interacts with host TUFM; this interaction contributes to the virus-induced degradation of mitochondria by autophagy, which leads to degradation of host MAVS and inhibition of type I interferon (IFN) responses. Interacts with host MAP1LC3B; this interaction contributes to the virus-induced degradation of mitochondria by autophagy, which leads to degradation of host MAVS and inhibition of type I interferon (IFN) responses. As to quaternary structure, homodimer. Homotetramer; forms heterotetrameric Gn-Gc spikes in the pre-fusion conformation. Homotrimer; forms homotrimer in the post-fusion conformation at acidic pH. Interacts (via C-terminus) with the nucleoprotein. Post-translationally, envelope polyprotein precursor is quickly cleaved in vivo just after synthesis, presumably by host signal peptidase.

It localises to the virion membrane. It is found in the host cell surface. Its subcellular location is the host Golgi apparatus membrane. The protein resides in the host endoplasmic reticulum membrane. The protein localises to the host mitochondrion. Functionally, forms homotetramers with glycoprotein C at the surface of the virion. Attaches the virion to host cell receptors including integrin ITGAV/ITGB3. This attachment induces virion internalization predominantly through clathrin-dependent endocytosis. Mediates the assembly and budding of infectious virus particles through its interaction with the nucleocapsid protein and the viral genome. May dysregulate normal immune and endothelial cell responses through an ITAM motif. Translocates to mitochondria, binds to host TUFM and recruits MAP1LC3B. These interactions induce mitochondrial autophagy and therefore destruction of host MAVS leading to inhibition of type I interferon (IFN) responses. Concomitant breakdown of glycoprotein N is apparently prevented by the nucleoprotein that may inhibit Gn-stimulated autophagosome-lysosome fusion. Interacts with the viral genomic RNA. In terms of biological role, forms homotetramers with glycoprotein N at the surface of the virion. Attaches the virion to host cell receptors including integrin ITGAV/ITGB3. This attachment induces virion internalization predominantly through clathrin-dependent endocytosis. Class II fusion protein that promotes fusion of viral membrane with host endosomal membrane after endocytosis of the virion. The chain is Envelopment polyprotein (GP) from Homo sapiens (Human).